Reading from the N-terminus, the 262-residue chain is 1,2-epoxyphenylacetyl-CoA isomerase (262 aa).

It belongs to the enoyl-CoA hydratase/isomerase family.

The enzyme catalyses 2-(1,2-epoxy-1,2-dihydrophenyl)acetyl-CoA = 2-oxepin-2(3H)-ylideneacetyl-CoA. It participates in aromatic compound metabolism; phenylacetate degradation. Its function is as follows. Catalyzes the reversible conversion of the epoxide to 2-oxepin-2(3H)-ylideneacetyl-CoA (oxepin-CoA). In Escherichia coli (strain K12), this protein is 1,2-epoxyphenylacetyl-CoA isomerase (paaG).